Here is a 70-residue protein sequence, read N- to C-terminus: ATP synthase subunit c (70 aa).

2 consecutive transmembrane segments (helical) span residues 4–24 (IAAAIAIGLGALGAGIGNGLI) and 49–69 (GIALVEALPIIAVVIAFLAFF).

It belongs to the ATPase C chain family. As to quaternary structure, F-type ATPases have 2 components, F(1) - the catalytic core - and F(0) - the membrane proton channel. F(1) has five subunits: alpha(3), beta(3), gamma(1), delta(1), epsilon(1). F(0) has three main subunits: a(1), b(2) and c(10-14). The alpha and beta chains form an alternating ring which encloses part of the gamma chain. F(1) is attached to F(0) by a central stalk formed by the gamma and epsilon chains, while a peripheral stalk is formed by the delta and b chains. The F(1)F(0) complex interacts with SpoIIIJ and YqjG; YqgA is found in the same complex.

The protein resides in the cell membrane. Its function is as follows. F(1)F(0) ATP synthase produces ATP from ADP in the presence of a proton or sodium gradient. F-type ATPases consist of two structural domains, F(1) containing the extramembraneous catalytic core and F(0) containing the membrane proton channel, linked together by a central stalk and a peripheral stalk. During catalysis, ATP synthesis in the catalytic domain of F(1) is coupled via a rotary mechanism of the central stalk subunits to proton translocation. In terms of biological role, key component of the F(0) channel; it plays a direct role in translocation across the membrane. A homomeric c-ring of between 10-14 subunits forms the central stalk rotor element with the F(1) delta and epsilon subunits. The protein is ATP synthase subunit c of Bacillus subtilis (strain 168).